A 610-amino-acid polypeptide reads, in one-letter code: DNA mismatch repair protein MutL (610 aa).

This sequence belongs to the DNA mismatch repair MutL/HexB family.

This protein is involved in the repair of mismatches in DNA. It is required for dam-dependent methyl-directed DNA mismatch repair. May act as a 'molecular matchmaker', a protein that promotes the formation of a stable complex between two or more DNA-binding proteins in an ATP-dependent manner without itself being part of a final effector complex. This Rickettsia africae (strain ESF-5) protein is DNA mismatch repair protein MutL.